The chain runs to 261 residues: MEMO1 family protein AF_2310 (261 aa).

Belongs to the MEMO1 family.

This chain is MEMO1 family protein AF_2310, found in Archaeoglobus fulgidus (strain ATCC 49558 / DSM 4304 / JCM 9628 / NBRC 100126 / VC-16).